We begin with the raw amino-acid sequence, 276 residues long: Adenylyl-sulfate kinase 1, chloroplastic (276 aa).

The transit peptide at M1–C38 directs the protein to the chloroplast. The segment at T46–T74 is disordered. Over residues N62–T74 the composition is skewed to polar residues. G108–T116 is an ATP binding site. Residues D138, R141, R155, N158, I181–S182, and G231 each bind substrate. The Phosphoserine intermediate role is filled by S182.

This sequence belongs to the APS kinase family. In terms of assembly, homodimer; disulfide-linked. Interacts with APK2. Expressed in root vasculature, root tips, leaf epidermal and guard cells, pollen grains and funiculus of developing seeds.

The protein localises to the plastid. It is found in the chloroplast. It catalyses the reaction adenosine 5'-phosphosulfate + ATP = 3'-phosphoadenylyl sulfate + ADP + H(+). It participates in sulfur metabolism; hydrogen sulfide biosynthesis; sulfite from sulfate: step 2/3. Its function is as follows. Catalyzes the synthesis of activated sulfate. Essential for plant reproduction and viability. Required for the production of glucosinolates. This chain is Adenylyl-sulfate kinase 1, chloroplastic (APK1), found in Arabidopsis thaliana (Mouse-ear cress).